A 327-amino-acid polypeptide reads, in one-letter code: Probable cytosolic iron-sulfur protein assembly protein CIAO1 homolog (327 aa).

7 WD repeats span residues glycine 3–lysine 42, glycine 48–asparagine 87, glycine 92–cysteine 131, serine 137–cysteine 176, glycine 181–glycine 220, tyrosine 239–glutamine 278, and alanine 290–glutamate 327.

Belongs to the WD repeat CIA1 family.

In terms of biological role, essential component of the cytosolic iron-sulfur (Fe/S) protein assembly machinery. Required for the maturation of extramitochondrial Fe/S proteins. This is Probable cytosolic iron-sulfur protein assembly protein CIAO1 homolog from Nematostella vectensis (Starlet sea anemone).